A 340-amino-acid polypeptide reads, in one-letter code: DNA-directed RNA polymerase subunit alpha (340 aa).

An alpha N-terminal domain (alpha-NTD) region spans residues 1–233 (MIQNEIPIPA…NLFIPLLHEK (233 aa)). An alpha C-terminal domain (alpha-CTD) region spans residues 263–340 (RKEISFKHIF…LPKNKFSIND (78 aa)).

It belongs to the RNA polymerase alpha chain family. In plastids the minimal PEP RNA polymerase catalytic core is composed of four subunits: alpha, beta, beta', and beta''. When a (nuclear-encoded) sigma factor is associated with the core the holoenzyme is formed, which can initiate transcription.

The protein localises to the plastid. It is found in the chloroplast. The enzyme catalyses RNA(n) + a ribonucleoside 5'-triphosphate = RNA(n+1) + diphosphate. Its function is as follows. DNA-dependent RNA polymerase catalyzes the transcription of DNA into RNA using the four ribonucleoside triphosphates as substrates. In Anthoceros angustus (Hornwort), this protein is DNA-directed RNA polymerase subunit alpha (rpoA).